The chain runs to 101 residues: Small ribosomal subunit protein bS18c (101 aa).

The protein belongs to the bacterial ribosomal protein bS18 family. Component of the chloroplast small ribosomal subunit (SSU). Mature 70S chloroplast ribosomes of higher plants consist of a small (30S) and a large (50S) subunit. The 30S small subunit contains 1 molecule of ribosomal RNA (16S rRNA) and 24 different proteins. The 50S large subunit contains 3 rRNA molecules (23S, 5S and 4.5S rRNA) and 33 different proteins.

The protein localises to the plastid. The protein resides in the chloroplast. Its function is as follows. Component of the chloroplast ribosome (chloro-ribosome), a dedicated translation machinery responsible for the synthesis of chloroplast genome-encoded proteins, including proteins of the transcription and translation machinery and components of the photosynthetic apparatus. The protein is Small ribosomal subunit protein bS18c (RPS18) of Spinacia oleracea (Spinach).